A 635-amino-acid polypeptide reads, in one-letter code: Threonine--tRNA ligase (635 aa).

The TGS domain maps to 1 to 61 (MIKITLKDGK…HKDSSLEILT (61 aa)). The interval 242-532 (DHRKLGKELD…LIEQYAGAFP (291 aa)) is catalytic. Zn(2+)-binding residues include Cys-333, His-384, and His-509.

This sequence belongs to the class-II aminoacyl-tRNA synthetase family. Homodimer. Requires Zn(2+) as cofactor.

The protein resides in the cytoplasm. The enzyme catalyses tRNA(Thr) + L-threonine + ATP = L-threonyl-tRNA(Thr) + AMP + diphosphate + H(+). Functionally, catalyzes the attachment of threonine to tRNA(Thr) in a two-step reaction: L-threonine is first activated by ATP to form Thr-AMP and then transferred to the acceptor end of tRNA(Thr). Also edits incorrectly charged L-seryl-tRNA(Thr). The polypeptide is Threonine--tRNA ligase (Clostridium botulinum (strain Okra / Type B1)).